The primary structure comprises 482 residues: ADP-ribosylation factor GTPase-activating protein effector protein 1 (482 aa).

Positions 116-156 (QHKSTHSHHINHQTHPIHSSSSNSNSNNRIPTKTDSSKQHT) are disordered. A compositionally biased stretch (basic residues) spans 118–127 (KSTHSHHINH). The segment covering 134 to 143 (SSSSNSNSNN) has biased composition (low complexity). The region spanning 170 to 297 (DELLSIVRKI…FVIDSNQGRE (128 aa)) is the Arf-GAP domain. The segment at 186–210 (CCDCGSTATVEWVSINLLCILCIKC) adopts a C4-type zinc-finger fold.

It is found in the cytoplasm. GTPase-activating protein (GAP) for the ADP ribosylation factors ARF1 and ARF2. May be involved in the endocytic pathway. This chain is ADP-ribosylation factor GTPase-activating protein effector protein 1 (AGE1), found in Saccharomyces cerevisiae (strain ATCC 204508 / S288c) (Baker's yeast).